The primary structure comprises 916 residues: Translation initiation factor IF-2 (916 aa).

Residues 151 to 191 (NLDEQQRLAESDRARDEAIQRKRDEEQAAKDRVEAERKAAE) are compositionally biased toward basic and acidic residues. Disordered stretches follow at residues 151 to 262 (NLDE…SHVM) and 280 to 328 (HLSA…ERPT). 2 stretches are compositionally biased toward low complexity: residues 192-243 (EAAA…ATPA) and 293-305 (RGKP…SSSS). Positions 415-584 (SRPPVVTIMG…SLQAEVLELK (170 aa)) constitute a tr-type G domain. The segment at 424–431 (GHVDHGKT) is G1. 424–431 (GHVDHGKT) provides a ligand contact to GTP. The G2 stretch occupies residues 449–453 (GITQH). Residues 470–473 (DTPG) are G3. GTP contacts are provided by residues 470–474 (DTPGH) and 524–527 (NKID). Residues 524 to 527 (NKID) form a G4 region. Residues 560–562 (SAK) form a G5 region.

This sequence belongs to the TRAFAC class translation factor GTPase superfamily. Classic translation factor GTPase family. IF-2 subfamily.

The protein resides in the cytoplasm. Its function is as follows. One of the essential components for the initiation of protein synthesis. Protects formylmethionyl-tRNA from spontaneous hydrolysis and promotes its binding to the 30S ribosomal subunits. Also involved in the hydrolysis of GTP during the formation of the 70S ribosomal complex. The protein is Translation initiation factor IF-2 of Xanthomonas campestris pv. campestris (strain ATCC 33913 / DSM 3586 / NCPPB 528 / LMG 568 / P 25).